A 206-amino-acid polypeptide reads, in one-letter code: MATQETTPGSQTEESNALDLPSAYDIRDYVLQRPSQQTNSEAFSSEEACSIPCSSDVDPDSSNLNTEQNDSWTSENFWFYPSVKGQPETKEEDDGLRKSLDKFYEVFGNPQPASGNSLSTSVCQCLSQKINELKDQENQTYTLRSFQMARVIFNQNGCSILQKHSRDAHFYPVREGSTSLQDEKLTPGLSKDIIHFLLQQNLMKDQ.

Polar residues-rich tracts occupy residues 1-15 (MATQ…TEES), 33-43 (RPSQQTNSEAF), and 60-69 (DSSNLNTEQN). Disordered regions lie at residues 1-21 (MATQ…LDLP) and 33-69 (RPSQ…TEQN).

In terms of assembly, component of the shieldin complex, consisting of SHLD1, SHLD2, SHLD3 and MAD2L2/REV7. Within the complex, SHLD2 forms a scaffold which interacts with a SHLD3-MAD2L2 subcomplex via its N-terminus, and with SHLD1 via its C-terminus. Interacts with ASTE1.

It is found in the chromosome. Its function is as follows. Component of the shieldin complex, which plays an important role in repair of DNA double-stranded breaks (DSBs). During G1 and S phase of the cell cycle, the complex functions downstream of TP53BP1 to promote non-homologous end joining (NHEJ) and suppress DNA end resection. Mediates various NHEJ-dependent processes including immunoglobulin class-switch recombination, and fusion of unprotected telomeres. The protein is Shieldin complex subunit 1 of Bos taurus (Bovine).